A 331-amino-acid polypeptide reads, in one-letter code: L-lactate dehydrogenase A chain (331 aa).

Residues 29–57 (GMVG…MEDK) and arginine 98 contribute to the NAD(+) site. Substrate is bound by residues arginine 105, asparagine 137, and arginine 168. An NAD(+)-binding site is contributed by asparagine 137. Histidine 192 serves as the catalytic Proton acceptor. Threonine 247 serves as a coordination point for substrate.

Belongs to the LDH/MDH superfamily. LDH family. As to quaternary structure, homotetramer.

It localises to the cytoplasm. The catalysed reaction is (S)-lactate + NAD(+) = pyruvate + NADH + H(+). Its pathway is fermentation; pyruvate fermentation to lactate; (S)-lactate from pyruvate: step 1/1. Its function is as follows. Interconverts simultaneously and stereospecifically pyruvate and lactate with concomitant interconversion of NADH and NAD(+). The chain is L-lactate dehydrogenase A chain (ldha) from Chaenocephalus aceratus (Blackfin icefish).